The primary structure comprises 323 residues: MDSKYQCVKLNDGHFMPVLGFGTYAPAEVPKSKALEATKLAIEAGFRHIDSAHLYNNEEQVGLAIRSKIADGSVKREDIFYTSKLWCNSHRPELVRPALERSLKNLQLDYVDLYLIHFPVSVKPGEEVIPKDENGKILFDTVDLCATWEAVEKCKDAGLAKSIGVSNFNRRQLEMILNKPGLKYKPVCNQVECHPYFNQRKLLDFCKSKDIVLVAYSALGSHREEPWVDPNSPVLLEDPVLCALAKKHKRTPALIALRYQLQRGVVVLAKSYNEQRIRQNVQVFEFQLTSEEMKAIDGLNRNVRYLTLDIFAGPPNYPFSDEY.

NADP(+)-binding positions include 20-24 and Asp50; that span reads GFGTY. Tyr24 contacts substrate. Tyr55 (proton donor) is an active-site residue. His117 is a binding site for substrate. NADP(+) is bound by residues 166 to 167, Gln190, and 216 to 222; these read SN and YSALGSH. The substrate site is built by His222 and Trp227. Residue 270-280 coordinates NADP(+); the sequence is KSYNEQRIRQN.

Belongs to the aldo/keto reductase family. In terms of assembly, monomer. As to expression, expressed in all tissues tested including liver, prostate, testis, adrenal gland, brain, uterus, mammary gland and keratinocytes. Highest levels found in liver, mammary gland and brain.

The protein localises to the cytoplasm. The protein resides in the cytosol. It catalyses the reaction a 3alpha-hydroxysteroid + NADP(+) = a 3-oxosteroid + NADPH + H(+). The enzyme catalyses a 3alpha-hydroxysteroid + NAD(+) = a 3-oxosteroid + NADH + H(+). The catalysed reaction is (17R,20S)-17,20-dihydroxypregn-4-en-3-one + NADP(+) = 17alpha-hydroxyprogesterone + NADPH + H(+). It carries out the reaction (17R,20S)-17,20-dihydroxypregn-4-en-3-one + NAD(+) = 17alpha-hydroxyprogesterone + NADH + H(+). It catalyses the reaction (20S)-hydroxypregn-4-en-3-one + NADP(+) = progesterone + NADPH + H(+). The enzyme catalyses (20S)-hydroxypregn-4-en-3-one + NAD(+) = progesterone + NADH + H(+). The catalysed reaction is (1R,2R)-1,2-dihydrobenzene-1,2-diol + NADP(+) = catechol + NADPH + H(+). It carries out the reaction (S)-indan-1-ol + NAD(+) = indan-1-one + NADH + H(+). It catalyses the reaction (S)-indan-1-ol + NADP(+) = indan-1-one + NADPH + H(+). The enzyme catalyses 5alpha-androstane-3alpha,17beta-diol + NADP(+) = 17beta-hydroxy-5alpha-androstan-3-one + NADPH + H(+). The catalysed reaction is 5alpha-androstane-3beta,17beta-diol + NADP(+) = 17beta-hydroxy-5alpha-androstan-3-one + NADPH + H(+). It carries out the reaction 5alpha-androstane-3alpha,17beta-diol + NAD(+) = 17beta-hydroxy-5alpha-androstan-3-one + NADH + H(+). It catalyses the reaction 17beta-hydroxy-5alpha-androstan-3-one + NADP(+) = 5alpha-androstan-3,17-dione + NADPH + H(+). The enzyme catalyses androsterone + NADP(+) = 5alpha-androstan-3,17-dione + NADPH + H(+). The catalysed reaction is androsterone + NADPH + H(+) = 5alpha-androstane-3alpha,17beta-diol + NADP(+). It carries out the reaction 5alpha-androstane-3alpha,17beta-diol + NAD(+) = androsterone + NADH + H(+). It catalyses the reaction 17beta-estradiol + NADP(+) = estrone + NADPH + H(+). The enzyme catalyses 17beta-estradiol + NAD(+) = estrone + NADH + H(+). The catalysed reaction is testosterone + NADP(+) = androst-4-ene-3,17-dione + NADPH + H(+). It carries out the reaction 20alpha-hydroxy-5beta-pregnan-3-one + NADP(+) = 5beta-pregnan-3,20-dione + NADPH + H(+). It catalyses the reaction 3beta-hydroxy-5beta-pregnane-20-one + NADP(+) = 5beta-pregnan-3,20-dione + NADPH + H(+). The enzyme catalyses 3beta-hydroxy-5beta-pregnane-20-one + NADPH + H(+) = 3beta,20alpha-dihydroxy-5beta-pregnane + NADP(+). The catalysed reaction is (3beta,5alpha,17beta)-3-hydroxyandrostan-17-yl sulfate + NADP(+) = 5alpha-dihydrotestosterone sulfate + NADPH + H(+). Its pathway is steroid metabolism. Inhibited by hexestrol with an IC(50) of 9.5 uM, 1,10-phenanthroline with an IC(50) of 55 uM, 1,7-phenanthroline with an IC(50) of 72 uM, flufenamic acid with an IC(50) of 6.0 uM, indomethacin with an IC(50) of 140 uM, ibuprofen with an IC(50) of 950 uM, lithocholic acid with an IC(50) of 25 uM, ursodeoxycholic acid with an IC(50) of 340 uM and chenodeoxycholic acid with an IC(50) of 570 uM. The oxidation reaction is inhibited by low micromolar concentrations of NADPH. Its function is as follows. Cytosolic aldo-keto reductase that catalyzes the NADH and NADPH-dependent reduction of ketosteroids to hydroxysteroids. Most probably acts as a reductase in vivo since the oxidase activity measured in vitro is inhibited by physiological concentrations of NADPH. Displays a broad positional specificity acting on positions 3, 17 and 20 of steroids and regulates the metabolism of hormones like estrogens and androgens. May also reduce conjugated steroids such as 5alpha-dihydrotestosterone sulfate. Displays affinity for bile acids. This Homo sapiens (Human) protein is Aldo-keto reductase family 1 member C1 (AKR1C1).